Reading from the N-terminus, the 322-residue chain is Dirigent protein 9 (322 aa).

The signal sequence occupies residues 1 to 20 (MAKALHITIFLFLISSNLLA).

Belongs to the plant dirigent protein family. In terms of assembly, homodimer.

The protein resides in the secreted. The protein localises to the extracellular space. Its subcellular location is the apoplast. Its function is as follows. Dirigent proteins impart stereoselectivity on the phenoxy radical-coupling reaction, yielding optically active lignans from two molecules of coniferyl alcohol in the biosynthesis of lignans, flavonolignans, and alkaloids and thus plays a central role in plant secondary metabolism. The protein is Dirigent protein 9 (DIR9) of Arabidopsis thaliana (Mouse-ear cress).